The sequence spans 401 residues: CCA-adding enzyme (401 aa).

Residues Gly-32 and Arg-35 each coordinate ATP. The CTP site is built by Gly-32 and Arg-35. Mg(2+) contacts are provided by Asp-45 and Asp-47. Residues Arg-116, Asp-159, Arg-162, Arg-165, and Arg-168 each coordinate ATP. Residues Arg-116, Asp-159, Arg-162, Arg-165, and Arg-168 each coordinate CTP.

This sequence belongs to the tRNA nucleotidyltransferase/poly(A) polymerase family. Bacterial CCA-adding enzyme type 3 subfamily. As to quaternary structure, homodimer. Requires Mg(2+) as cofactor.

It catalyses the reaction a tRNA precursor + 2 CTP + ATP = a tRNA with a 3' CCA end + 3 diphosphate. The enzyme catalyses a tRNA with a 3' CCA end + 2 CTP + ATP = a tRNA with a 3' CCACCA end + 3 diphosphate. Catalyzes the addition and repair of the essential 3'-terminal CCA sequence in tRNAs without using a nucleic acid template. Adds these three nucleotides in the order of C, C, and A to the tRNA nucleotide-73, using CTP and ATP as substrates and producing inorganic pyrophosphate. tRNA 3'-terminal CCA addition is required both for tRNA processing and repair. Also involved in tRNA surveillance by mediating tandem CCA addition to generate a CCACCA at the 3' terminus of unstable tRNAs. While stable tRNAs receive only 3'-terminal CCA, unstable tRNAs are marked with CCACCA and rapidly degraded. This is CCA-adding enzyme from Leuconostoc mesenteroides subsp. mesenteroides (strain ATCC 8293 / DSM 20343 / BCRC 11652 / CCM 1803 / JCM 6124 / NCDO 523 / NBRC 100496 / NCIMB 8023 / NCTC 12954 / NRRL B-1118 / 37Y).